Consider the following 275-residue polypeptide: Probable histone chaperone asf-1 (275 aa).

Composition is skewed to acidic residues over residues 157–166, 183–207, and 230–247; these read EDPVAEPVED, DGQEDDDEEEEDDDEMEANAEEVDL, and KMEDDGANEDVDMADDEP. Positions 157–275 are disordered; it reads EDPVAEPVED…SDKTNNEMVQ (119 aa). The span at 265-275 shows a compositional bias: basic and acidic residues; it reads LSDKTNNEMVQ.

Belongs to the ASF1 family. In terms of assembly, interacts with histone H3 and histone H4.

It localises to the nucleus. Functionally, histone chaperone that facilitates histone deposition and histone exchange and removal during nucleosome assembly and disassembly. The polypeptide is Probable histone chaperone asf-1 (Caenorhabditis elegans).